Consider the following 402-residue polypeptide: Oxysterol-binding protein 12 (402 aa).

The disordered stretch occupies residues 333–366 (NNNNDKETAEEKAKIEEKQRKEESERREKGILWE). A compositionally biased stretch (basic and acidic residues) spans 336–366 (NDKETAEEKAKIEEKQRKEESERREKGILWE).

Belongs to the OSBP family.

The chain is Oxysterol-binding protein 12 (osbL) from Dictyostelium discoideum (Social amoeba).